A 33-amino-acid chain; its full sequence is Ice-structuring protein SS-3 (33 aa).

It belongs to the type-I AFP family.

Its function is as follows. Antifreeze proteins lower the blood freezing point. The protein is Ice-structuring protein SS-3 of Myoxocephalus scorpius (Shorthorn sculpin).